The chain runs to 81 residues: Photosystem I iron-sulfur center (81 aa).

4Fe-4S ferredoxin-type domains follow at residues 1–31 and 37–68; these read MSHTVKIYDTCIGCTQCVRACPTDVLEMVPW and GQIASSPRTEDCVGCKRCETACPTDFLSIRVY. Residues Cys-11, Cys-14, Cys-17, Cys-21, Cys-48, Cys-51, Cys-54, and Cys-58 each coordinate [4Fe-4S] cluster.

The cyanobacterial PSI reaction center is composed of one copy each of PsaA,B,C,D,E,F,I,J,K,L,M and X, and forms trimeric complexes. [4Fe-4S] cluster serves as cofactor.

The protein resides in the cellular thylakoid membrane. It catalyses the reaction reduced [plastocyanin] + hnu + oxidized [2Fe-2S]-[ferredoxin] = oxidized [plastocyanin] + reduced [2Fe-2S]-[ferredoxin]. In terms of biological role, apoprotein for the two 4Fe-4S centers FA and FB of photosystem I (PSI); essential for photochemical activity. FB is the terminal electron acceptor of PSI, donating electrons to ferredoxin. The C-terminus interacts with PsaA/B/D and helps assemble the protein into the PSI complex. Required for binding of PsaD and PsaE to PSI. PSI is a plastocyanin/cytochrome c6-ferredoxin oxidoreductase, converting photonic excitation into a charge separation, which transfers an electron from the donor P700 chlorophyll pair to the spectroscopically characterized acceptors A0, A1, FX, FA and FB in turn. The protein is Photosystem I iron-sulfur center of Acaryochloris marina (strain MBIC 11017).